Reading from the N-terminus, the 415-residue chain is Protein maelstrom homolog (415 aa).

The segment at residues 4–73 (KKAARNAYFF…DPDSTSTYND (70 aa)) is a DNA-binding region (HMG box). The disordered stretch occupies residues 367-399 (SSDPKYSTDKSERSSFEPRGVKPYQGPSGGGRG). Positions 372–386 (YSTDKSERSSFEPRG) are enriched in basic and acidic residues.

It belongs to the maelstrom family.

It localises to the cytoplasm. Its subcellular location is the nucleus. Functionally, plays a central role during spermatogenesis by repressing transposable elements and preventing their mobilization, which is essential for the germline integrity. Acts via the piRNA metabolic process, which mediates the repression of transposable elements during meiosis by forming complexes composed of piRNAs and Piwi proteins and governs the methylation and subsequent repression of transposons. Its association with piP-bodies suggests a participation in the secondary piRNAs metabolic process. Required for the localization of germ-cell factors to the meiotic nuage. This is Protein maelstrom homolog (mael) from Xenopus tropicalis (Western clawed frog).